The sequence spans 517 residues: Gamma-1-syntrophin (517 aa).

The PDZ domain occupies 57 to 140 (TVTIRRQTVG…EVTLTVSFLK (84 aa)). In terms of domain architecture, PH spans 283–390 (QIVYMGWCEA…WERAFQTATF (108 aa)).

It belongs to the syntrophin family. Interacts with the dystrophin protein DMD and related proteins DTNA and DTNB. Interacts with DGKZ.

Its subcellular location is the cytoplasm. It localises to the cytoskeleton. It is found in the nucleus. In terms of biological role, adapter protein that binds to and probably organizes the subcellular localization of a variety of proteins. May link various receptors to the actin cytoskeleton and the dystrophin glycoprotein complex. May participate in regulating the subcellular location of diacylglycerol kinase-zeta to ensure that diacylglycerol is rapidly inactivated following receptor activation. This chain is Gamma-1-syntrophin (Sntg1), found in Mus musculus (Mouse).